A 221-amino-acid polypeptide reads, in one-letter code: Cytidylate kinase 1 (221 aa).

7 to 15 (GPSASGKSS) provides a ligand contact to ATP.

The protein belongs to the cytidylate kinase family. Type 1 subfamily.

Its subcellular location is the cytoplasm. It carries out the reaction CMP + ATP = CDP + ADP. It catalyses the reaction dCMP + ATP = dCDP + ADP. The polypeptide is Cytidylate kinase 1 (Borrelia garinii subsp. bavariensis (strain ATCC BAA-2496 / DSM 23469 / PBi) (Borreliella bavariensis)).